Reading from the N-terminus, the 216-residue chain is U1 small nuclear ribonucleoprotein C (216 aa).

Residues 4–36 (FFCDYCDVYLTHDSMSVRKAHNAGRNHLRNVVE) form a Matrin-type zinc finger. Composition is skewed to pro residues over residues 68-80 (AMAP…PPFG), 87-198 (QLPP…PAPP), and 206-216 (PGPPPGLSEKR). The segment at 68 to 216 (AMAPPGAFPP…GPPPGLSEKR (149 aa)) is disordered.

Belongs to the U1 small nuclear ribonucleoprotein C family. U1 snRNP is composed of the 7 core Sm proteins B/B', D1, D2, D3, E, F and G that assemble in a heptameric protein ring on the Sm site of the small nuclear RNA to form the core snRNP, and at least 3 U1 snRNP-specific proteins U1-70K, U1-A and U1-C. U1-C interacts with U1 snRNA and the 5' splice-site region of the pre-mRNA.

It localises to the nucleus. In terms of biological role, component of the spliceosomal U1 snRNP, which is essential for recognition of the pre-mRNA 5' splice-site and the subsequent assembly of the spliceosome. U1-C is directly involved in initial 5' splice-site recognition for both constitutive and regulated alternative splicing. The interaction with the 5' splice-site seems to precede base-pairing between the pre-mRNA and the U1 snRNA. Stimulates commitment or early (E) complex formation by stabilizing the base pairing of the 5' end of the U1 snRNA and the 5' splice-site region. The sequence is that of U1 small nuclear ribonucleoprotein C from Aspergillus fumigatus (strain ATCC MYA-4609 / CBS 101355 / FGSC A1100 / Af293) (Neosartorya fumigata).